The following is an 837-amino-acid chain: Putative outer membrane protein assembly factor TP_0326 (837 aa).

The signal sequence occupies residues 1 to 21 (MLKKASAFLIASCCVMSLAWA). The Periplasmic segment spans residues 22 to 433 (QANDNWYEGK…ILNVEEQSTA (412 aa)). 5 consecutive POTRA domains span residues 31–105 (KPIS…VKER), 106–182 (PSVK…IQEG), 185–273 (TVVS…VVEG), 276–354 (YRYG…VVER), and 357–430 (SHVE…VEEQ). A beta stranded transmembrane segment spans residues 434–442 (NVQFGVTFS). Over 443-450 (GVGEAGTF) the chain is Extracellular; loop L1. A beta stranded transmembrane segment spans residues 451 to 461 (PLSLFCQWEEK). Topologically, residues 462 to 468 (NFLGKGN) are periplasmic. A beta stranded transmembrane segment spans residues 469 to 476 (EISVNATL). At 477 to 478 (GS) the chain is on the extracellular; loop L2 side. A beta stranded transmembrane segment spans residues 479-489 (EAQSLKLGYVE). The Periplasmic segment spans residues 490-499 (RWFLGSPLTV). Residues 500-520 (GFDFELTHKNLFVYRAGSYGN) traverse the membrane as a beta stranded segment. Residues 521–530 (GLPHPYTSRE) lie on the Extracellular; loop L3 side of the membrane. The chain crosses the membrane as a beta stranded span at residues 531–543 (QWASSPGLAESFR). Over 544 to 554 (LKYSRFESAIG) the chain is Periplasmic. Residues 555–568 (AHTGYQWYPRYAVI) form a beta stranded membrane-spanning segment. Residues 569–601 (RVNGGVDFRVVKNFYDKDNNQPFDLTVKEQLNW) are Extracellular; loop L4-facing. A beta stranded membrane pass occupies residues 602-615 (TSINSFWTSVSFDG). Topologically, residues 616 to 623 (RDFAYDPS) are periplasmic. A beta stranded transmembrane segment spans residues 624-636 (SGWFLGQRCTFNG). The Extracellular; loop L5 portion of the chain corresponds to 637–644 (LVPFLEKE). Residues 645-658 (HSFRSDTKAEFYVT) form a beta stranded membrane-spanning segment. At 659–667 (LLNYPVSAV) the chain is on the periplasmic side. The chain crosses the membrane as a beta stranded span at residues 668 to 682 (WNLKFVLAFYTGVSV). The Extracellular; loop L6 portion of the chain corresponds to 683–724 (QTYYGRRKSENGKGNGVRSGALVIDGVLVGRGWSEDAKKNTG). A beta stranded membrane pass occupies residues 725–736 (DLLLHHWIEFRW). At 737 to 741 (PLAHG) the chain is on the periplasmic side. Residues 742 to 756 (IVSFDFFFDAAMVYN) traverse the membrane as a beta stranded segment. The Extracellular; loop L7 segment spans residues 757 to 786 (IESQSPNGSSSASSSSSSSSSSSRTTSSEG). The tract at residues 761-785 (SPNGSSSASSSSSSSSSSSRTTSSE) is disordered. The segment covering 765-784 (SSSASSSSSSSSSSSRTTSS) has biased composition (low complexity). Residues 787 to 799 (LYKMSYGPGLRFT) traverse the membrane as a beta stranded segment. At 800-802 (LPQ) the chain is on the periplasmic side. A beta stranded transmembrane segment spans residues 803–814 (FPLKLAFANTFT). The Extracellular; loop L8 portion of the chain corresponds to 815–824 (SPGGIPKTKK). The chain crosses the membrane as a beta stranded span at residues 825-829 (NWNFV). At 830–837 (LSFTVNNL) the chain is on the periplasmic side.

Belongs to the BamA family. Part of 2 complexes of about 239 and 164 kDa.

Its subcellular location is the cell outer membrane. Might be part of the outer membrane protein assembly complex, which is involved in assembly and insertion of beta-barrel proteins into the outer membrane. Its function is as follows. Both rabbit immune serum and rabbit antiserum specific for extracytoplasmic loop L4 promote bacteria internalization by rabbit peritoneal macrophages. Pools of human syphilitic sera from the USA and Columbia recognize both the N-terminal POTRA-containing and C-terminal beta-barrel domains as well as loop L4, showing this protein stimulates the immune system in both humans and rabbits. This chain is Putative outer membrane protein assembly factor TP_0326 (tp92), found in Treponema pallidum (strain Nichols).